Consider the following 348-residue polypeptide: Anthranilate phosphoribosyltransferase (348 aa).

5-phospho-alpha-D-ribose 1-diphosphate is bound by residues G89, 92-93 (GD), T97, 99-102 (NIST), 117-125 (KHGNRSVSS), and S129. An anthranilate-binding site is contributed by G89. Residue S101 participates in Mg(2+) binding. N120 is an anthranilate binding site. R175 lines the anthranilate pocket. Mg(2+) contacts are provided by D233 and E234.

The protein belongs to the anthranilate phosphoribosyltransferase family. As to quaternary structure, homodimer. Requires Mg(2+) as cofactor.

It carries out the reaction N-(5-phospho-beta-D-ribosyl)anthranilate + diphosphate = 5-phospho-alpha-D-ribose 1-diphosphate + anthranilate. It participates in amino-acid biosynthesis; L-tryptophan biosynthesis; L-tryptophan from chorismate: step 2/5. Functionally, catalyzes the transfer of the phosphoribosyl group of 5-phosphorylribose-1-pyrophosphate (PRPP) to anthranilate to yield N-(5'-phosphoribosyl)-anthranilate (PRA). The chain is Anthranilate phosphoribosyltransferase from Shewanella putrefaciens (strain CN-32 / ATCC BAA-453).